Consider the following 50-residue polypeptide: Large ribosomal subunit protein bL33 (50 aa).

The protein belongs to the bacterial ribosomal protein bL33 family.

The polypeptide is Large ribosomal subunit protein bL33 (Sulfurimonas denitrificans (strain ATCC 33889 / DSM 1251) (Thiomicrospira denitrificans (strain ATCC 33889 / DSM 1251))).